The chain runs to 563 residues: Protein NOXP20 (563 aa).

Positions 1 to 84 are disordered; the sequence is MSDDAGDTLA…ANALEPPLNG (84 aa). A compositionally biased stretch (low complexity) spans 56-68; it reads AAVQGAGAAAIGP. Ser120 is modified (phosphoserine). The tract at residues 165–206 is disordered; that stretch reads VNSGSSEGAQPNTENGVPEITDAATDQGPAESPPTSPSSASR. Polar residues predominate over residues 166–179; sequence NSGSSEGAQPNTEN. Residues Thr185 and Thr189 each carry the phosphothreonine modification. Ser196 carries the phosphoserine modification. Thr199 is modified (phosphothreonine). Phosphoserine is present on residues Ser202 and Ser261. The stretch at 343 to 367 forms a coiled coil; it reads AAKELENEENQEEQGLEEKGEEFAR. The interval 411–436 is disordered; sequence SEEETKKEEKEEKSQDPQEDKKEEKK.

It belongs to the FAM114 family.

Its subcellular location is the cytoplasm. In terms of biological role, may play a role in neuronal cell development. In Homo sapiens (Human), this protein is Protein NOXP20 (FAM114A1).